We begin with the raw amino-acid sequence, 287 residues long: Ketoacyl reductase HetN (287 aa).

An NAD(+)-binding site is contributed by 11-35 (LTGASRGLGVYIARALAKEQATVVC). Residue serine 142 participates in substrate binding. Residue tyrosine 155 is the Proton acceptor of the active site.

It belongs to the short-chain dehydrogenases/reductases (SDR) family.

Its function is as follows. May be involved in repressing heterocyst differentiation and may be essential for preventing all vegetative cells from differentiating. The protein is Ketoacyl reductase HetN (hetN) of Nostoc sp. (strain PCC 7120 / SAG 25.82 / UTEX 2576).